Consider the following 473-residue polypeptide: Siroheme synthase (473 aa).

Residues 1 to 222 are precorrin-2 dehydrogenase /sirohydrochlorin ferrochelatase; it reads MNTQPHHSSP…GDESRADARL (222 aa). Residues 37-38 and 58-59 each bind NAD(+); these read EI and EK. Residues 233-473 form a uroporphyrinogen-III C-methyltransferase region; the sequence is GEVWLVGAGP…QVVRHRVVSP (241 aa). Residue Pro-242 coordinates S-adenosyl-L-methionine. Asp-265 serves as the catalytic Proton acceptor. The Proton donor role is filled by Lys-287. S-adenosyl-L-methionine is bound by residues 318–320, Ile-323, 348–349, Met-401, and Gly-430; these read GGD and SA.

In the N-terminal section; belongs to the precorrin-2 dehydrogenase / sirohydrochlorin ferrochelatase family. It in the C-terminal section; belongs to the precorrin methyltransferase family.

The catalysed reaction is uroporphyrinogen III + 2 S-adenosyl-L-methionine = precorrin-2 + 2 S-adenosyl-L-homocysteine + H(+). It carries out the reaction precorrin-2 + NAD(+) = sirohydrochlorin + NADH + 2 H(+). It catalyses the reaction siroheme + 2 H(+) = sirohydrochlorin + Fe(2+). It functions in the pathway cofactor biosynthesis; adenosylcobalamin biosynthesis; precorrin-2 from uroporphyrinogen III: step 1/1. It participates in cofactor biosynthesis; adenosylcobalamin biosynthesis; sirohydrochlorin from precorrin-2: step 1/1. The protein operates within porphyrin-containing compound metabolism; siroheme biosynthesis; precorrin-2 from uroporphyrinogen III: step 1/1. Its pathway is porphyrin-containing compound metabolism; siroheme biosynthesis; siroheme from sirohydrochlorin: step 1/1. It functions in the pathway porphyrin-containing compound metabolism; siroheme biosynthesis; sirohydrochlorin from precorrin-2: step 1/1. Its function is as follows. Multifunctional enzyme that catalyzes the SAM-dependent methylations of uroporphyrinogen III at position C-2 and C-7 to form precorrin-2 via precorrin-1. Then it catalyzes the NAD-dependent ring dehydrogenation of precorrin-2 to yield sirohydrochlorin. Finally, it catalyzes the ferrochelation of sirohydrochlorin to yield siroheme. This is Siroheme synthase from Gluconobacter oxydans (strain 621H) (Gluconobacter suboxydans).